A 270-amino-acid chain; its full sequence is Small ribosomal subunit protein uS2 (270 aa).

It belongs to the universal ribosomal protein uS2 family. As to quaternary structure, component of the small ribosomal subunit. Mature ribosomes consist of a small (40S) and a large (60S) subunit. The 40S subunit contains about 33 different proteins and 1 molecule of RNA (18S). The 60S subunit contains about 49 different proteins and 3 molecules of RNA (28S, 5.8S and 5S). Interacts with oho23B/rpS21.

Its subcellular location is the cytoplasm. It localises to the nucleus. Functionally, required for the assembly and/or stability of the 40S ribosomal subunit. Required for the processing of the 20S rRNA-precursor to mature 18S rRNA in a late step of the maturation of 40S ribosomal subunits. Required during oogenesis and imaginal development. This is Small ribosomal subunit protein uS2 from Drosophila persimilis (Fruit fly).